A 502-amino-acid polypeptide reads, in one-letter code: Arabinose import ATP-binding protein AraG (502 aa).

ABC transporter domains lie at 6-241 (LEFD…MVGR) and 252-497 (REVG…MVES). 38–45 (GENGAGKS) serves as a coordination point for ATP.

It belongs to the ABC transporter superfamily. Arabinose importer (TC 3.A.1.2.2) family. In terms of assembly, the complex is composed of two ATP-binding proteins (AraG), two transmembrane proteins (AraH) and a solute-binding protein (AraF).

The protein resides in the cell inner membrane. The enzyme catalyses L-arabinose(out) + ATP + H2O = L-arabinose(in) + ADP + phosphate + H(+). Functionally, part of the ABC transporter complex AraFGH involved in arabinose import. Responsible for energy coupling to the transport system. This is Arabinose import ATP-binding protein AraG from Mannheimia succiniciproducens (strain KCTC 0769BP / MBEL55E).